Here is a 56-residue protein sequence, read N- to C-terminus: MAVQKSKKSRAARGMRRSHDALTTAAVSVDSASGETHLRHHVTADGFYRGRKVINK.

The span at 1-16 (MAVQKSKKSRAARGMR) shows a compositional bias: basic residues. Residues 1-22 (MAVQKSKKSRAARGMRRSHDAL) form a disordered region.

The protein belongs to the bacterial ribosomal protein bL32 family.

The protein is Large ribosomal subunit protein bL32 of Photobacterium profundum (strain SS9).